A 296-amino-acid polypeptide reads, in one-letter code: Small ribosomal subunit protein uS2 (296 aa).

A disordered region spans residues 245 to 296 (WEAPAAGFAGATGTGWDGAAGDEWGAAPATTEWAASAAPAAASGEAAKETTW). Low complexity predominate over residues 263 to 289 (AAGDEWGAAPATTEWAASAAPAAASGE).

This sequence belongs to the universal ribosomal protein uS2 family. Component of the small ribosomal subunit. Mature ribosomes consist of a small (40S) and a large (60S) subunit. The 40S subunit contains about 33 different proteins and 1 molecule of RNA (18S). The 60S subunit contains about 49 different proteins and 3 molecules of RNA (25S, 5.8S and 5S). Interacts with RPS21.

The protein resides in the cytoplasm. Functionally, required for the assembly and/or stability of the 40S ribosomal subunit. Required for the processing of the 20S rRNA-precursor to mature 18S rRNA in a late step of the maturation of 40S ribosomal subunits. The polypeptide is Small ribosomal subunit protein uS2 (Fusarium vanettenii (strain ATCC MYA-4622 / CBS 123669 / FGSC 9596 / NRRL 45880 / 77-13-4) (Fusarium solani subsp. pisi)).